Here is a 392-residue protein sequence, read N- to C-terminus: MKWMVVALLCLPLLEAALIRVPLKKMKSIRETMKEQGVLKDFLKNHKYDPGQKYHFGKFGDYSVLYEPMAYMDASYYGEISIGTPPQNFLVLFDTGSSNLWVSSVYCQSEACTTHTRYNPSKSSTYYTQGQTFSLQYGTGSLTGFFGYDTLRVQSIQVPNQEFGLSENEPGTNFVYAQFDGIMGLAYPGLSSGGATTALQGMLGEGALSQPLFGVYLGSQQGSNGGQIVFGGVDENLYTGELTWIPVTQELYWQITIDDFLIGNQASGWCSSSGCQGIVDTGTSLLVMPAQYLNELLQTIGAQEGEYGQYFVSCDSVSSLPTLTFVLNGVQFPLSPSSYIIQEEGSCMVGLESLSLNAESGQPLWILGDVFLRSYYAVFDMGNNRVGLAPSV.

Residues 1-16 (MKWMVVALLCLPLLEA) form the signal peptide. Residues 17-62 (ALIRVPLKKMKSIRETMKEQGVLKDFLKNHKYDPGQKYHFGKFGDY) constitute a propeptide, activation peptide. Residues 76-389 (YYGEISIGTP…DMGNNRVGLA (314 aa)) enclose the Peptidase A1 domain. Asp94 is a catalytic residue. Intrachain disulfides connect Cys107–Cys112 and Cys270–Cys275. The active site involves Asp280. A disulfide bridge links Cys314 with Cys347.

This sequence belongs to the peptidase A1 family.

The protein localises to the secreted. The catalysed reaction is More restricted specificity than pepsin A, but shows preferential cleavage at Tyr-|-Xaa bonds. High activity on hemoglobin.. Hydrolyzes a variety of proteins. This chain is Gastricsin (Pgc), found in Mus musculus (Mouse).